The chain runs to 1028 residues: SWI/SNF-related matrix-associated actin-dependent regulator of chromatin subfamily A containing DEAD/H box 1 (1028 aa).

Position 1 is an N-acetylmethionine (methionine 1). Residues 13–81 are disordered; sequence KRNKIEEAPE…PENDRKASIS (69 aa). The residue at position 54 (threonine 54) is a Phosphothreonine. Serine 57 carries the phosphoserine modification. Residue threonine 71 is modified to Phosphothreonine. Lysine 77 is covalently cross-linked (Glycyl lysine isopeptide (Lys-Gly) (interchain with G-Cter in SUMO2)). The residue at position 79 (serine 79) is a Phosphoserine. Lysine 84 participates in a covalent cross-link: Glycyl lysine isopeptide (Lys-Gly) (interchain with G-Cter in SUMO2). 4 positions are modified to phosphoserine: serine 124, serine 127, serine 132, and serine 153. The CUE 1 domain occupies 158–200; sequence YSDNLSTVRQTRYSENLSSDLLKLIDSTSTMDGAIAAALLMFG. Disordered stretches follow at residues 204–253 and 303–348; these read GGGP…NWEK and ASPS…KRKK. Phosphoserine is present on residues serine 213, serine 216, serine 241, and serine 244. The region spanning 253-296 is the CUE 2 domain; the sequence is KQESIVLKLQKEFPNFDKEELREVLKEHEWMYTEALESLKVFAE. Serine 304 is subject to Phosphoserine. Residues lysine 337 and lysine 473 each participate in a glycyl lysine isopeptide (Lys-Gly) (interchain with G-Cter in SUMO2) cross-link. The region spanning 511-679 is the Helicase ATP-binding domain; that stretch reads ALVHKHGLNG…MSLLNFVMPH (169 aa). 523-531 lines the ATP pocket; it reads ADEMGLGKT. The DEGH box motif lies at 630–633; it reads DEGH. The Nuclear localization signal signature appears at 723–740; sequence RRVKEEVLKQLPPKKDRI. Residue lysine 726 forms a Glycyl lysine isopeptide (Lys-Gly) (interchain with G-Cter in SUMO2) linkage. Residues 860-1012 enclose the Helicase C-terminal domain; that stretch reads VLGCILSELK…MTTVDEGDEG (153 aa). 899-906 provides a ligand contact to ATP; that stretch reads YLRLDGKT. Lysine 998 is covalently cross-linked (Glycyl lysine isopeptide (Lys-Gly) (interchain with G-Cter in SUMO2)). The DEAD box motif lies at 1007-1010; that stretch reads DEGD.

This sequence belongs to the SNF2/RAD54 helicase family. As to quaternary structure, binds to DNA preferentially in the vicinity of transcriptional start sites. Interacts with MSH2 and TRIM28. Part of a complex composed of TRIM28, HDAC1, HDAC2 and EHMT2. Interacts with PCNA.

Its subcellular location is the nucleus. It localises to the chromosome. It carries out the reaction ATP + H2O = ADP + phosphate + H(+). Its function is as follows. DNA helicase that possesses intrinsic ATP-dependent nucleosome-remodeling activity and is both required for DNA repair and heterochromatin organization. Promotes DNA end resection of double-strand breaks (DSBs) following DNA damage: probably acts by weakening histone DNA interactions in nucleosomes flanking DSBs. Required for the restoration of heterochromatin organization after replication. Acts at replication sites to facilitate the maintenance of heterochromatin by directing H3 and H4 histones deacetylation, H3 'Lys-9' trimethylation (H3K9me3) and restoration of silencing. The sequence is that of SWI/SNF-related matrix-associated actin-dependent regulator of chromatin subfamily A containing DEAD/H box 1 (SMARCAD1) from Bos taurus (Bovine).